Consider the following 227-residue polypeptide: Deoxyribose-phosphate aldolase (227 aa).

The active-site Proton donor/acceptor is D98. K161 acts as the Schiff-base intermediate with acetaldehyde in catalysis. The active-site Proton donor/acceptor is the K191.

It belongs to the DeoC/FbaB aldolase family. DeoC type 1 subfamily.

The protein resides in the cytoplasm. The enzyme catalyses 2-deoxy-D-ribose 5-phosphate = D-glyceraldehyde 3-phosphate + acetaldehyde. It participates in carbohydrate degradation; 2-deoxy-D-ribose 1-phosphate degradation; D-glyceraldehyde 3-phosphate and acetaldehyde from 2-deoxy-alpha-D-ribose 1-phosphate: step 2/2. In terms of biological role, catalyzes a reversible aldol reaction between acetaldehyde and D-glyceraldehyde 3-phosphate to generate 2-deoxy-D-ribose 5-phosphate. The protein is Deoxyribose-phosphate aldolase of Frankia alni (strain DSM 45986 / CECT 9034 / ACN14a).